The chain runs to 412 residues: Tyrosine--tRNA ligase 1 (412 aa).

An L-tyrosine-binding site is contributed by Y41. A 'HIGH' region motif is present at residues 46-55; that stretch reads ATADSLHVGH. Y174 and Q178 together coordinate L-tyrosine. The short motif at 234–238 is the 'KMSKS' region element; that stretch reads KMGKS. Residue K237 coordinates ATP. Positions 348–411 constitute an S4 RNA-binding domain; the sequence is LSLTDLLLEH…KKQHLHLRLE (64 aa).

Belongs to the class-I aminoacyl-tRNA synthetase family. TyrS type 1 subfamily. Homodimer.

The protein localises to the cytoplasm. It carries out the reaction tRNA(Tyr) + L-tyrosine + ATP = L-tyrosyl-tRNA(Tyr) + AMP + diphosphate + H(+). Catalyzes the attachment of tyrosine to tRNA(Tyr) in a two-step reaction: tyrosine is first activated by ATP to form Tyr-AMP and then transferred to the acceptor end of tRNA(Tyr). This chain is Tyrosine--tRNA ligase 1, found in Pseudomonas aeruginosa (strain ATCC 15692 / DSM 22644 / CIP 104116 / JCM 14847 / LMG 12228 / 1C / PRS 101 / PAO1).